The sequence spans 420 residues: Glucose-1-phosphate adenylyltransferase (420 aa).

Residues Tyr97, Gly162, 177 to 178 (EK), and Ser188 each bind alpha-D-glucose 1-phosphate.

It belongs to the bacterial/plant glucose-1-phosphate adenylyltransferase family. Homotetramer.

It carries out the reaction alpha-D-glucose 1-phosphate + ATP + H(+) = ADP-alpha-D-glucose + diphosphate. Its pathway is glycan biosynthesis; glycogen biosynthesis. Its function is as follows. Involved in the biosynthesis of ADP-glucose, a building block required for the elongation reactions to produce glycogen. Catalyzes the reaction between ATP and alpha-D-glucose 1-phosphate (G1P) to produce pyrophosphate and ADP-Glc. The polypeptide is Glucose-1-phosphate adenylyltransferase (Pseudothermotoga lettingae (strain ATCC BAA-301 / DSM 14385 / NBRC 107922 / TMO) (Thermotoga lettingae)).